We begin with the raw amino-acid sequence, 1736 residues long: Collagen alpha-2(XI) chain (1736 aa).

Residues 1–27 (MERCSRCHRLLLFLPLVLGLSAAPGWA) form the signal peptide. The Laminin G-like domain occupies 57–228 (DVAYRVARPA…QSCGQKDLEC (172 aa)). Residues 215-486 (QAAYQSCGQK…ILQQARLALR (272 aa)) are nonhelical region. Disordered regions lie at residues 228 to 270 (CERE…PTES), 364 to 465 (LSAE…DKGP), and 485 to 1538 (LRGP…GSPA). A compositionally biased stretch (polar residues) spans 258–269 (PQSQEPQKQPTE). 3 consecutive Collagen-like domains span residues 399–447 (GPPG…GPPG), 487–545 (GPPG…ADGA), and 546–583 (RGMP…GLPG). The triple-helical region stretch occupies residues 487–1500 (GPPGPMGYTG…PGHPGPPGEV (1014 aa)). The segment covering 497–533 (RPGPLGQPGSPGLKGESGDLGPQGPRGPQGLTGPPGK) has biased composition (low complexity). Residues 615–624 (KGPPGIPGPP) show a composition bias toward pro residues. Residues 650–668 (QQGTPGAQGLPGPQGAIGP) show a composition bias toward low complexity. The region spanning 682–737 (GMPGSDGLPGHPGKEGPPGTKGNQGPSGPQGPLGYPGPRGVKGVDGIRGLKGHKGE) is the Collagen-like 4 domain. The segment covering 765 to 774 (RGEDGPEGPK) has biased composition (basic and acidic residues). 2 stretches are compositionally biased toward low complexity: residues 776 to 789 (RTGP…TGLM) and 842 to 861 (PTGP…SGAK). Collagen-like domains are found at residues 868–924 (GPHG…PGPP), 967–1025 (GDPG…AAGS), 1026–1055 (GGPI…EKGP), 1056–1086 (IGPT…DGDK), and 1114–1172 (GPVG…ETGD). Residues 994–1003 (GTAGGPGLKG) show a composition bias toward gly residues. The segment covering 1029–1040 (IGPPGRPGPQGP) has biased composition (pro residues). 2 stretches are compositionally biased toward low complexity: residues 1115–1133 (PVGQ…ARGP) and 1155–1164 (IGLQGLPGPS). Over residues 1176 to 1187 (MGPPGPPGPRGP) the composition is skewed to pro residues. Positions 1188–1197 (AGPNGADGPQ) are enriched in low complexity. Over residues 1198 to 1207 (GSPGGVGNLG) the composition is skewed to gly residues. Over residues 1217–1230 (ESGSPGVQGEPGVK) the composition is skewed to low complexity. Positions 1232–1241 (PRGERGEKGE) are enriched in basic and acidic residues. Residues 1256–1272 (PTGDNGPKGNPGPVGFP) are compositionally biased toward low complexity. Basic and acidic residues predominate over residues 1287-1296 (DGAKGDRGED). The span at 1376 to 1386 (QQGRPGATGQA) shows a compositional bias: low complexity. Pro residues-rich tracts occupy residues 1388-1397 (PPGPVGPPGL) and 1457-1467 (PGGPPGLPGPS). Collagen-like domains lie at 1393-1447 (GPPG…GETG) and 1448-1499 (IPGA…PPGE). The segment covering 1469–1481 (PKGAKGATGPAGP) has biased composition (low complexity). Residues 1501-1736 (IQPLPIQMPK…VLLGPVCFMG (236 aa)) constitute a propeptide, C-terminal propeptide. Residues 1541-1735 (EEIFGSLDSL…GVLLGPVCFM (195 aa)) enclose the Fibrillar collagen NC1 domain. An intrachain disulfide couples Cys1571 to Cys1603. The Ca(2+) site is built by Asp1589, Asn1591, Gln1592, Cys1594, and Asp1597. N-linked (GlcNAc...) asparagine glycosylation is present at Asn1604. 2 cysteine pairs are disulfide-bonded: Cys1612/Cys1733 and Cys1655/Cys1689.

This sequence belongs to the fibrillar collagen family. As to quaternary structure, trimers composed of three different chains: alpha 1(XI), alpha 2(XI), and alpha 3(XI). Alpha 3(XI) is a post-translational modification of alpha 1(II). Alpha 1(V) can also be found instead of alpha 3(XI)=1(II). Prolines at the third position of the tripeptide repeating unit (G-X-Y) are hydroxylated in some or all of the chains.

The protein localises to the secreted. The protein resides in the extracellular space. It is found in the extracellular matrix. Its function is as follows. May play an important role in fibrillogenesis by controlling lateral growth of collagen II fibrils. The sequence is that of Collagen alpha-2(XI) chain (Col11a2) from Mus musculus (Mouse).